Here is a 1663-residue protein sequence, read N- to C-terminus: Cortactin-binding protein 2 (1663 aa).

Disordered stretches follow at residues 1 to 23 (MATDGASCEPDLSRAPEDAAGAA), 203 to 222 (KKKTNELEEELSTEKRRSTE), 352 to 440 (ARPG…LHPG), 454 to 478 (GNANDPDQNGNTTQSPPSRDVSPTS), and 498 to 616 (RFTS…PKPS). Positions 119–276 (KKMQERMSAQ…EQLKRGSDSK (158 aa)) form a coiled coil. Positions 384–396 (NGPSTGSTPDPTS) are enriched in low complexity. The span at 411–422 (QTPGIAPQNSQA) shows a compositional bias: polar residues. Position 498 is an asymmetric dimethylarginine (R498). Positions 583 to 593 (TVASPPSSLPQ) are enriched in polar residues. ANK repeat units follow at residues 709–739 (GRPTLLQQAAAQGNVTLLSMLLNEEGLDINY), 743–772 (DGHSALYSAAKNGHTDCVRLLLSAEAQVNA), 776–805 (NGFTPLCAAAAQGHFECVELLIAYDANINH), 809–838 (GGQTPLYLACKNGNKECIKLLLEAGTNRSV), and 842–871 (DGWTPVHAAVDTGNVDSLKLLMYHRILARG). The disordered stretch occupies residues 876–897 (EEGSESSVFDLDGGEESPEGIS). The stretch at 912 to 942 (EGWTAAHIAASKGFKNCLEILCRHGGLEPER) is one ANK 6 repeat. A disordered region spans residues 1446-1485 (NKKKGESGAWRKVNTSPRRKSGRFSLPTWNKPDLSTEGMK). Residue S1524 is modified to Phosphoserine. Disordered stretches follow at residues 1580 to 1602 (SQKEVSPLSSHQTTECSNSKSKT) and 1615 to 1663 (VPRS…KPNK). The span at 1582 to 1599 (KEVSPLSSHQTTECSNSK) shows a compositional bias: polar residues. The segment covering 1624–1638 (SQNTKRSSSSSNTRQ) has biased composition (low complexity). Over residues 1645 to 1663 (SKEENWNLHKNEHLEKPNK) the composition is skewed to basic and acidic residues.

Interacts with CTTN/cortactin SH3 domain. Interacts with STRN, STRN4/zinedin and MOB4/phocein; this interactions mediate the association with the STRIPAK core complex and may regulate dendritic spine distribution of the STRIPAK complex in hippocampal neurons. Activation of glutamate receptors weakens the interaction with STRN and STRN4.

Its subcellular location is the cytoplasm. The protein resides in the cell cortex. The protein localises to the cell projection. It is found in the dendritic spine. Its function is as follows. Regulates the dendritic spine distribution of CTTN/cortactin in hippocampal neurons, and thus controls dendritic spinogenesis and dendritic spine maintenance. Associates with the striatin-interacting phosphatase and kinase (STRIPAK) core complex to regulate dendritic spine distribution of the STRIPAK complex in hippocampal neurons. The protein is Cortactin-binding protein 2 (CTTNBP2) of Nomascus leucogenys (Northern white-cheeked gibbon).